The chain runs to 967 residues: Protein moonraker (967 aa).

Residues 178 to 201 (SHPGQSDLTVPNSPPTHDPGLQPH) are disordered. A compositionally biased stretch (polar residues) spans 179-188 (HPGQSDLTVP). Residues Ser287 and Ser409 each carry the phosphoserine modification. 2 disordered regions span residues 401–431 (ALER…SRPS) and 490–601 (KAGK…SHLT). Residues 525–543 (QSQPHSKSRVQQTTVSSRL) show a composition bias toward polar residues. The segment covering 557-568 (WIPPNPTSPPAS) has biased composition (pro residues). Positions 616–642 (AETSKRLKELEELKAKEIDSMQKQRLD) form a coiled coil. 2 positions are modified to phosphoserine: Ser700 and Ser826. The interval 849–872 (RPCNGNSLDESVGTEEGSEKREAP) is disordered. The necessary and sufficient for CEP20-binding stretch occupies residues 885–967 (GRAPLFVPPG…FTSEFLEAAT (83 aa)).

Interacts with CEP63. Interacts with WDR62. Forms a complex with OFD1 and CEP20/FOR20. Interacts with PCM1.

The protein resides in the cytoplasm. The protein localises to the cytoskeleton. It is found in the microtubule organizing center. Its subcellular location is the centrosome. It localises to the centriole. The protein resides in the centriolar satellite. Functionally, involved in centriole duplication. Positively regulates CEP63 centrosomal localization. Required for WDR62 centrosomal localization and promotes the centrosomal localization of CDK2. May play a role in cilium assembly. This is Protein moonraker (KIAA0753) from Homo sapiens (Human).